Reading from the N-terminus, the 297-residue chain is UDP-N-acetylglucosamine transporter TMEM241 (297 aa).

Helical transmembrane passes span 7–29 (LLGLTFCTCYLASHLTNKYVLSV), 32–52 (FTYPTLFQGWQTFIGGLLLHM), 69–89 (VLIWLPASALFVGIIYAGSKA), 93–113 (LAVPVFFILHNVAEVLTCGYQ), 121–141 (TSLSKICSALFLLAAAGCLPF), 146–166 (FDPDGYFWALIHIFCVGSYKI), 187–207 (IFSMVLLAFASHPTGDLFGAL), 211–231 (FLYFYRFHGSCCASGVLGFFL), 250–270 (WILCAKVVTAGLSMLLFDMAL), and 271–291 (TKATVGCFLLGGLGEALLVFS).

It belongs to the nucleotide-sugar transporter family. SLC35A subfamily. In terms of tissue distribution, widely expressed with high expression in lung.

Its subcellular location is the golgi apparatus. The protein localises to the cis-Golgi network membrane. In terms of biological role, golgi-localized UDP-N-acetylglucosamine (UDP-GlcNAc) transporter that transports UDP-N-acetylglucosamine into Golgi lumen. Contributes to lysosomal targeting of NPC2, a key protein required for lysosomal cholesterol exiting, and that utilizes the mannose-6-phosphate (M6P) modification pathway for its lysosomal targeting. In Mus musculus (Mouse), this protein is UDP-N-acetylglucosamine transporter TMEM241 (Tmem241).